The following is an 85-amino-acid chain: Progonadoliberin-2 (85 aa).

Residues 1–23 (MCASRLVLLLGLLLCVGAHLSSG) form the signal peptide. Gln-24 is modified (pyrrolidone carboxylic acid). Gly-33 is modified (glycine amide).

Belongs to the GnRH family. In terms of tissue distribution, midbrain tegmentum.

The protein localises to the secreted. Stimulates the secretion of gonadotropins. In Verasper moseri (Barfin flounder), this protein is Progonadoliberin-2 (gnrh2).